A 269-amino-acid chain; its full sequence is E3 ubiquitin-protein ligase complex slx8-rfp subunit slx8 (269 aa).

A compositionally biased stretch (basic and acidic residues) spans Met1 to Asn10. Disordered stretches follow at residues Met1–Ala75 and Pro166–Pro196. The segment covering Pro60–Leu70 has biased composition (polar residues). The segment at Cys206–Arg247 adopts an RING-type zinc-finger fold.

Part of an E3 ubiquitin complex including rfp1, rfp2 and slx8. Interacts with rfp1 and rfp2.

It localises to the nucleus. The enzyme catalyses S-ubiquitinyl-[E2 ubiquitin-conjugating enzyme]-L-cysteine + [acceptor protein]-L-lysine = [E2 ubiquitin-conjugating enzyme]-L-cysteine + N(6)-ubiquitinyl-[acceptor protein]-L-lysine.. The protein operates within protein modification; protein ubiquitination. Mediates ubiquitination and subsequent desumoylation/degradation of sumoylated proteins and proteins containing SUMO-like domains. Acts as a critical suppressor of gross chromosomal rearrangements (GCRs) during normal cell cycle progression. Involved in stabilizing, restarting or resolving transiently stalled replication forks. Prevents accumulation of DNA damage during cell cycle progression. The polypeptide is E3 ubiquitin-protein ligase complex slx8-rfp subunit slx8 (slx8) (Schizosaccharomyces pombe (strain 972 / ATCC 24843) (Fission yeast)).